Reading from the N-terminus, the 145-residue chain is MKLNTIAPAEGSKKDRRRVGRGIGSGFGKTAGRGHKGQHARSGGYHKVGFEGGQMPLQRRIPKRGFRNTLGVRVVEVALSQLESAAIDGVVDLEGLLLRRIVRGSPDAVKVILTGEITQGLTVRGLRVSAGARAAIEKAGGKVED.

Positions 1–52 (MKLNTIAPAEGSKKDRRRVGRGIGSGFGKTAGRGHKGQHARSGGYHKVGFEG) are disordered. Residues 21–31 (RGIGSGFGKTA) show a composition bias toward gly residues.

This sequence belongs to the universal ribosomal protein uL15 family. As to quaternary structure, part of the 50S ribosomal subunit.

Functionally, binds to the 23S rRNA. The chain is Large ribosomal subunit protein uL15 from Acidithiobacillus ferrooxidans (strain ATCC 53993 / BNL-5-31) (Leptospirillum ferrooxidans (ATCC 53993)).